The chain runs to 129 residues: Histone H2A type 2-C (129 aa).

Residues 1–22 (MSGRGKQGGKARAKAKSRSSRA) form a disordered region. S2 carries the N-acetylserine modification. Position 2 is a phosphoserine; by RPS6KA5 (S2). Position 4 is a citrulline; alternate (R4). R4 is modified (symmetric dimethylarginine; by PRMT5; alternate). N6-(2-hydroxyisobutyryl)lysine; alternate occurs at positions 6 and 10. An N6-acetyllysine; alternate modification is found at K6. A compositionally biased stretch (basic residues) spans 7–19 (QGGKARAKAKSRS). An N6-lactoyllysine; alternate modification is found at K10. An N6-succinyllysine; alternate modification is found at K10. Residues K14 and K16 each participate in a glycyl lysine isopeptide (Lys-Gly) (interchain with G-Cter in ubiquitin) cross-link. K37 carries the N6-(2-hydroxyisobutyryl)lysine; alternate modification. Position 37 is an N6-(beta-hydroxybutyryl)lysine; alternate (K37). K37 bears the N6-crotonyllysine; alternate mark. An N6-(2-hydroxyisobutyryl)lysine mark is found at K75 and K76. K96 is modified (N6-(2-hydroxyisobutyryl)lysine; alternate). Position 96 is an N6-succinyllysine; alternate (K96). An N6-glutaryllysine; alternate modification is found at K96. K100 bears the N6-glutaryllysine mark. Q105 carries the post-translational modification N5-methylglutamine. N6-(2-hydroxyisobutyryl)lysine; alternate is present on K119. N6-crotonyllysine; alternate is present on residues K119 and K120. An N6-glutaryllysine; alternate mark is found at K119 and K120. A Glycyl lysine isopeptide (Lys-Gly) (interchain with G-Cter in ubiquitin); alternate cross-link involves residue K120. The residue at position 121 (T121) is a Phosphothreonine; by DCAF1. S123 is subject to Phosphoserine. K125 is modified (N6-crotonyllysine).

It belongs to the histone H2A family. The nucleosome is a histone octamer containing two molecules each of H2A, H2B, H3 and H4 assembled in one H3-H4 heterotetramer and two H2A-H2B heterodimers. The octamer wraps approximately 147 bp of DNA. Post-translationally, deiminated on Arg-4 in granulocytes upon calcium entry. Monoubiquitination of Lys-120 (H2AK119Ub) by RING1, TRIM37 and RNF2/RING2 complex gives a specific tag for epigenetic transcriptional repression and participates in X chromosome inactivation of female mammals. It is involved in the initiation of both imprinted and random X inactivation. Ubiquitinated H2A is enriched in inactive X chromosome chromatin. Ubiquitination of H2A functions downstream of methylation of 'Lys-27' of histone H3 (H3K27me). H2AK119Ub by RNF2/RING2 can also be induced by ultraviolet and may be involved in DNA repair. Following DNA double-strand breaks (DSBs), it is ubiquitinated through 'Lys-63' linkage of ubiquitin moieties by the E2 ligase UBE2N and the E3 ligases RNF8 and RNF168, leading to the recruitment of repair proteins to sites of DNA damage. Ubiquitination at Lys-14 and Lys-16 (H2AK13Ub and H2AK15Ub, respectively) in response to DNA damage is initiated by RNF168 that mediates monoubiquitination at these 2 sites, and 'Lys-63'-linked ubiquitin are then conjugated to monoubiquitin; RNF8 is able to extend 'Lys-63'-linked ubiquitin chains in vitro. H2AK119Ub and ionizing radiation-induced 'Lys-63'-linked ubiquitination (H2AK13Ub and H2AK15Ub) are distinct events. In terms of processing, phosphorylation on Ser-2 (H2AS1ph) is enhanced during mitosis. Phosphorylation on Ser-2 by RPS6KA5/MSK1 directly represses transcription. Acetylation of H3 inhibits Ser-2 phosphorylation by RPS6KA5/MSK1. Phosphorylation at Thr-121 (H2AT120ph) by DCAF1 is present in the regulatory region of many tumor suppresor genes and down-regulates their transcription. Post-translationally, symmetric dimethylation on Arg-4 by the PRDM1/PRMT5 complex may play a crucial role in the germ-cell lineage. Glutamine methylation at Gln-105 (H2AQ104me) by FBL is specifically dedicated to polymerase I. It is present at 35S ribosomal DNA locus and impairs binding of the FACT complex. In terms of processing, crotonylation (Kcr) is specifically present in male germ cells and marks testis-specific genes in post-meiotic cells, including X-linked genes that escape sex chromosome inactivation in haploid cells. Crotonylation marks active promoters and enhancers and confers resistance to transcriptional repressors. It is also associated with post-meiotically activated genes on autosomes. Post-translationally, lactylated in macrophages by EP300/P300 by using lactoyl-CoA directly derived from endogenous or exogenous lactate, leading to stimulates gene transcription.

The protein resides in the nucleus. It localises to the chromosome. Functionally, core component of nucleosome. Nucleosomes wrap and compact DNA into chromatin, limiting DNA accessibility to the cellular machineries which require DNA as a template. Histones thereby play a central role in transcription regulation, DNA repair, DNA replication and chromosomal stability. DNA accessibility is regulated via a complex set of post-translational modifications of histones, also called histone code, and nucleosome remodeling. The sequence is that of Histone H2A type 2-C from Bos taurus (Bovine).